Reading from the N-terminus, the 160-residue chain is Class II hydrophobin 8 (160 aa).

4 cysteine pairs are disulfide-bonded: Cys-92–Cys-141, Cys-102–Cys-132, Cys-103–Cys-115, and Cys-142–Cys-153.

It belongs to the cerato-ulmin hydrophobin family. As to quaternary structure, homodimer. Homodimers further self-assemble to form highly ordered films at water-air interfaces through intermolecular interactions.

The protein resides in the secreted. The protein localises to the cell wall. Functionally, aerial growth, conidiation, and dispersal of filamentous fungi in the environment rely upon a capability of their secreting small amphipathic proteins called hydrophobins (HPBs) with low sequence identity. Class I can self-assemble into an outermost layer of rodlet bundles on aerial cell surfaces, conferring cellular hydrophobicity that supports fungal growth, development and dispersal; whereas Class II form highly ordered films at water-air interfaces through intermolecular interactions but contribute nothing to the rodlet structure. In Trichoderma asperellum (strain ATCC 204424 / CBS 433.97 / NBRC 101777), this protein is Class II hydrophobin 8.